Reading from the N-terminus, the 249-residue chain is Probable transcriptional regulatory protein Rru_A1086 (249 aa).

Belongs to the TACO1 family.

It localises to the cytoplasm. In Rhodospirillum rubrum (strain ATCC 11170 / ATH 1.1.1 / DSM 467 / LMG 4362 / NCIMB 8255 / S1), this protein is Probable transcriptional regulatory protein Rru_A1086.